The following is a 491-amino-acid chain: 3-phosphoinositide-dependent protein kinase 1 (491 aa).

The Protein kinase domain occupies 44 to 311; it reads FEFGKIYGVG…YVALKRHPFF (268 aa). ATP is bound by residues 54–56 and Lys-73; that span reads SYS. The segment at 75 to 119 is PIF-pocket; that stretch reads MDKKFITKENKTAYVKLERIVLDQLEHPGIIKLYFTFQDTSSLYM. A PIF-binding region spans residues 77 to 112; it reads KKFITKENKTAYVKLERIVLDQLEHPGIIKLYFTFQ. Residues 122–124 and Glu-128 each bind ATP; that span reads ESC. Asp-167 acts as the Proton acceptor in catalysis. Glu-171 provides a ligand contact to ATP. Ser-177 carries the phosphoserine modification. Asp-185 contributes to the ATP binding site. The tract at residues 185-222 is activation loop; that stretch reads DFGSVKPMQDSQITVLPNAASDDKACTFVGTAAYVPPE. Residue Thr-211 is modified to Phosphothreonine; by autocatalysis. Phosphoserine is present on residues Ser-276 and Ser-337. Residues 321–377 are disordered; that stretch reads SQTPPKLAPDPASQTASPERDDTHGSPWNLTHIGDSLATQNEGHSAPPTSSESSGSI. Positions 365–376 are enriched in low complexity; that stretch reads SAPPTSSESSGS. Ser-382 bears the Phosphoserine mark. The region spanning 386 to 491 is the PH domain; the sequence is FDSRWQQFLE…KKAIETLQNR (106 aa).

Belongs to the protein kinase superfamily. AGC Ser/Thr protein kinase family. PDPK1 subfamily. As to quaternary structure, interacts with AGC1-5 and AGC1-7. Interacts with the C-terminal PIF domain of the protein kinases D6PK/AGC1-1, OXI1/AGC2-1 and PID. Post-translationally, phosphorylation on Thr-211 in the activation loop is required for full activity. PDK1 itself can autophosphorylate Thr-211, leading to its own activation. In terms of tissue distribution, ubiquitous.

The protein localises to the cytoplasm. It localises to the membrane. It catalyses the reaction L-seryl-[protein] + ATP = O-phospho-L-seryl-[protein] + ADP + H(+). It carries out the reaction L-threonyl-[protein] + ATP = O-phospho-L-threonyl-[protein] + ADP + H(+). With respect to regulation, activated by phosphatidic acid (PA) and in response to the fungal elicitor xylanase. In terms of biological role, may couple lipid signals to the activation-loop phosphorylation of several protein kinases of the so-called AGC kinase family. Interacts via its pleckstrin homology domain with phosphatidic acid, PtdIns3P and PtdIns(3,4)P2 and to a lesser extent with PtdIns(4,5)P2 and PtdIns4P. May play a general role in signaling processes controlling the pathogen/stress response, polar auxin transport and development. Transphosphorylates the AGC protein kinases OXI1/AGC2-1, PK1/S6K1, PK19/S6K2 and PID resulting in their activation. The polypeptide is 3-phosphoinositide-dependent protein kinase 1 (PDPK1) (Arabidopsis thaliana (Mouse-ear cress)).